Here is a 351-residue protein sequence, read N- to C-terminus: Holliday junction branch migration complex subunit RuvB (351 aa).

Positions 4–199 are large ATPase domain (RuvB-L); that stretch reads DNPQFNQWYE…FGIINSLQYY (196 aa). ATP is bound by residues Leu38, Arg39, Gly80, Lys83, Thr84, Thr85, 146–148, Arg189, Tyr199, and Arg236; that span reads EDY. Thr84 lines the Mg(2+) pocket. Residues 200–270 form a small ATPAse domain (RuvB-S) region; it reads TPEELQQIVV…IVTIGLDKLR (71 aa). A head domain (RuvB-H) region spans residues 273 to 351; the sequence is NRGLDETDHK…HLGHAYQRKL (79 aa). Residues Arg328 and Arg333 each coordinate DNA.

It belongs to the RuvB family. In terms of assembly, homohexamer. Forms an RuvA(8)-RuvB(12)-Holliday junction (HJ) complex. HJ DNA is sandwiched between 2 RuvA tetramers; dsDNA enters through RuvA and exits via RuvB. An RuvB hexamer assembles on each DNA strand where it exits the tetramer. Each RuvB hexamer is contacted by two RuvA subunits (via domain III) on 2 adjacent RuvB subunits; this complex drives branch migration. In the full resolvosome a probable DNA-RuvA(4)-RuvB(12)-RuvC(2) complex forms which resolves the HJ.

It localises to the cytoplasm. The catalysed reaction is ATP + H2O = ADP + phosphate + H(+). Its function is as follows. The RuvA-RuvB-RuvC complex processes Holliday junction (HJ) DNA during genetic recombination and DNA repair, while the RuvA-RuvB complex plays an important role in the rescue of blocked DNA replication forks via replication fork reversal (RFR). RuvA specifically binds to HJ cruciform DNA, conferring on it an open structure. The RuvB hexamer acts as an ATP-dependent pump, pulling dsDNA into and through the RuvAB complex. RuvB forms 2 homohexamers on either side of HJ DNA bound by 1 or 2 RuvA tetramers; 4 subunits per hexamer contact DNA at a time. Coordinated motions by a converter formed by DNA-disengaged RuvB subunits stimulates ATP hydrolysis and nucleotide exchange. Immobilization of the converter enables RuvB to convert the ATP-contained energy into a lever motion, pulling 2 nucleotides of DNA out of the RuvA tetramer per ATP hydrolyzed, thus driving DNA branch migration. The RuvB motors rotate together with the DNA substrate, which together with the progressing nucleotide cycle form the mechanistic basis for DNA recombination by continuous HJ branch migration. Branch migration allows RuvC to scan DNA until it finds its consensus sequence, where it cleaves and resolves cruciform DNA. This Leuconostoc mesenteroides subsp. mesenteroides (strain ATCC 8293 / DSM 20343 / BCRC 11652 / CCM 1803 / JCM 6124 / NCDO 523 / NBRC 100496 / NCIMB 8023 / NCTC 12954 / NRRL B-1118 / 37Y) protein is Holliday junction branch migration complex subunit RuvB.